The following is a 637-amino-acid chain: Chaperone protein DnaK (637 aa).

A Phosphothreonine; by autocatalysis modification is found at Thr-203. Positions Ser-600–Val-637 are disordered. Over residues Gly-604–Glu-616 the composition is skewed to low complexity. Over residues Ala-619 to Val-637 the composition is skewed to basic and acidic residues.

The protein belongs to the heat shock protein 70 family.

In terms of biological role, acts as a chaperone. The sequence is that of Chaperone protein DnaK from Dehalococcoides mccartyi (strain ATCC BAA-2266 / KCTC 15142 / 195) (Dehalococcoides ethenogenes (strain 195)).